The primary structure comprises 65 residues: Toxin CsEM1 (65 aa).

In terms of domain architecture, LCN-type CS-alpha/beta spans 1 to 65; the sequence is KEGYLVNSYT…VWPLPNKTCN (65 aa). 4 disulfide bridges follow: C12–C64, C16–C40, C25–C45, and C29–C47.

Belongs to the long (4 C-C) scorpion toxin superfamily. Sodium channel inhibitor family. Beta subfamily. In terms of tissue distribution, expressed by the venom gland.

It is found in the secreted. Its function is as follows. Beta toxins bind voltage-independently at site-4 of sodium channels (Nav) and shift the voltage of activation toward more negative potentials thereby affecting sodium channel activation and promoting spontaneous and repetitive firing. Highly potent. The sequence is that of Toxin CsEM1 from Centruroides sculpturatus (Arizona bark scorpion).